Here is a 70-residue protein sequence, read N- to C-terminus: Deleted in esophageal cancer 1 (70 aa).

As to expression, expressed in many tissues, with highest expression in prostate and testis. Reduced expression in esophageal carcinomas.

Functionally, candidate tumor suppressor. The protein is Deleted in esophageal cancer 1 of Homo sapiens (Human).